We begin with the raw amino-acid sequence, 436 residues long: Suppressor of cytokine signaling 4 (436 aa).

The disordered stretch occupies residues 1–25 (MAENNSKNVDVRPKTSRSRSADRKD). Residues 9–25 (VDVRPKTSRSRSADRKD) show a composition bias toward basic and acidic residues. The 96-residue stretch at 283-378 (CYWGVMDKYA…FFEPLLSTPL (96 aa)) folds into the SH2 domain. In terms of domain architecture, SOCS box spans 373–422 (LLSTPLIRTFPFSLQHICRTVICNCTTYDGIDALPIPSPMKLYLKEYHYK).

It functions in the pathway protein modification; protein ubiquitination. In terms of biological role, SOCS family proteins form part of a classical negative feedback system that regulates cytokine signal transduction. Substrate-recognition component of a SCF-like ECS (Elongin BC-CUL2/5-SOCS-box protein) E3 ubiquitin-protein ligase complex which mediates the ubiquitination and subsequent proteasomal degradation of target proteins. Inhibits EGF signaling by mediating the degradation of the Tyr-phosphorylated EGF receptor/EGFR. This is Suppressor of cytokine signaling 4 (Socs4) from Mus musculus (Mouse).